We begin with the raw amino-acid sequence, 280 residues long: Bifunctional protein FolD (280 aa).

Residues Gly158–Ser160, Ile183, and Ile222 contribute to the NADP(+) site.

This sequence belongs to the tetrahydrofolate dehydrogenase/cyclohydrolase family. In terms of assembly, homodimer.

It carries out the reaction (6R)-5,10-methylene-5,6,7,8-tetrahydrofolate + NADP(+) = (6R)-5,10-methenyltetrahydrofolate + NADPH. The enzyme catalyses (6R)-5,10-methenyltetrahydrofolate + H2O = (6R)-10-formyltetrahydrofolate + H(+). Its pathway is one-carbon metabolism; tetrahydrofolate interconversion. In terms of biological role, catalyzes the oxidation of 5,10-methylenetetrahydrofolate to 5,10-methenyltetrahydrofolate and then the hydrolysis of 5,10-methenyltetrahydrofolate to 10-formyltetrahydrofolate. In Mycoplasma mobile (strain ATCC 43663 / 163K / NCTC 11711) (Mesomycoplasma mobile), this protein is Bifunctional protein FolD.